We begin with the raw amino-acid sequence, 602 residues long: GTP-binding protein 2 (602 aa).

The segment at 16-64 (GGGPAVGGTLKARGAGSSSGCGGPKGKKKNGRNRGGKANNPPYLPPEAE) is disordered. Residues 40–50 (KGKKKNGRNRG) show a composition bias toward basic residues. In terms of domain architecture, tr-type G spans 170 to 398 (FLDLRVAVLG…LNILPPLTNS (229 aa)). GTP-binding positions include 179–186 (GNVDSGKS), 260–264 (DLAGH), and 316–319 (SKID).

It belongs to the TRAFAC class translation factor GTPase superfamily. Classic translation factor GTPase family. GTPBP1 subfamily. As to expression, predominantly expressed in thymus, spleen, and testis. Expressed at lower levels in brain, lung, kidney, and ovary.

This Homo sapiens (Human) protein is GTP-binding protein 2.